The sequence spans 448 residues: Histidinol dehydrogenase (448 aa).

Residues Tyr-136, Gln-197, and Asn-220 each contribute to the NAD(+) site. Residues Ser-243, Gln-265, and His-268 each coordinate substrate. Zn(2+) contacts are provided by Gln-265 and His-268. Catalysis depends on proton acceptor residues Glu-333 and His-334. Residues His-334, Asp-367, Glu-421, and His-426 each contribute to the substrate site. Asp-367 lines the Zn(2+) pocket. Residue His-426 coordinates Zn(2+).

The protein belongs to the histidinol dehydrogenase family. Requires Zn(2+) as cofactor.

The catalysed reaction is L-histidinol + 2 NAD(+) + H2O = L-histidine + 2 NADH + 3 H(+). The protein operates within amino-acid biosynthesis; L-histidine biosynthesis; L-histidine from 5-phospho-alpha-D-ribose 1-diphosphate: step 9/9. Catalyzes the sequential NAD-dependent oxidations of L-histidinol to L-histidinaldehyde and then to L-histidine. In Pseudomonas syringae pv. syringae (strain B728a), this protein is Histidinol dehydrogenase.